Here is a 438-residue protein sequence, read N- to C-terminus: UDP-N-acetylmuramoylalanine--D-glutamate ligase (438 aa).

Position 112–118 (112–118 (GSNGKST)) interacts with ATP.

This sequence belongs to the MurCDEF family.

The protein localises to the cytoplasm. It carries out the reaction UDP-N-acetyl-alpha-D-muramoyl-L-alanine + D-glutamate + ATP = UDP-N-acetyl-alpha-D-muramoyl-L-alanyl-D-glutamate + ADP + phosphate + H(+). It participates in cell wall biogenesis; peptidoglycan biosynthesis. In terms of biological role, cell wall formation. Catalyzes the addition of glutamate to the nucleotide precursor UDP-N-acetylmuramoyl-L-alanine (UMA). This Yersinia pestis bv. Antiqua (strain Antiqua) protein is UDP-N-acetylmuramoylalanine--D-glutamate ligase.